A 997-amino-acid chain; its full sequence is Protein Smaug (997 aa).

Residues methionine 1–threonine 37 show a composition bias toward polar residues. Disordered regions lie at residues methionine 1–proline 69 and leucine 329–serine 370. Composition is skewed to low complexity over residues threonine 44–proline 69 and leucine 329–serine 338. Phosphoserine is present on residues serine 564 and serine 575. The tract at residues glutamate 583 to methionine 763 is interaction with cup. Residues glycine 600–lysine 654 form the SAM domain. Disordered stretches follow at residues histidine 773–methionine 892 and glycine 944–glutamate 972. Composition is skewed to polar residues over residues asparagine 802–leucine 822 and histidine 854–proline 864. The residue at position 970 (serine 970) is a Phosphoserine.

This sequence belongs to the SMAUG family. Interacts with oskar (osk). Binds to the 3'-UTR of nos. Interacts with cup, which in turn recruits eIF4-E, leading to an indirect interaction between smg and eIF4-E that prevents mRNA translation.

It localises to the cytoplasm. Its function is as follows. Translation regulator that binds to the 3'-UTR of specific mRNAs such as nanos (nos) and prevent their translation. Prevents translation of unlocalized nos in the bulk cytoplasm via the recruitment of cup. The protein is Protein Smaug of Drosophila erecta (Fruit fly).